A 716-amino-acid polypeptide reads, in one-letter code: Exocyst complex component 8 (716 aa).

Serine 15 carries the post-translational modification Phosphoserine. Positions 110-119 (STGEDTAGAG) are enriched in low complexity. Positions 110-149 (STGEDTAGAGPRERGAAQAGFLPGPAGVPREGPGTGEEGK) are disordered. Residues 173-273 (YLVYNGDLVE…WLEVLEETKR (101 aa)) form the PH domain. Residues 275 to 284 (LSDKRRREQE) show a composition bias toward basic and acidic residues. Residues 275 to 319 (LSDKRRREQEEAAALRAPPPVTSKGSNPFEDEAEEELATPEAEEE) form a disordered region. Acidic residues predominate over residues 303-319 (FEDEAEEELATPEAEEE). The residue at position 313 (threonine 313) is a Phosphothreonine.

It belongs to the EXO84 family. The exocyst complex is composed of EXOC1, EXOC2, EXOC3, EXOC4, EXOC5, EXOC6, EXOC7 and EXOC8. Interacts (via PH domain) with GTP-bound RALA and RALB. Interacts with SH3BP1; required for the localization of both SH3BP1 and the exocyst to the leading edge of migrating cells.

It is found in the cytoplasm. It localises to the perinuclear region. The protein resides in the cell projection. The protein localises to the growth cone. Component of the exocyst complex involved in the docking of exocytic vesicles with fusion sites on the plasma membrane. The polypeptide is Exocyst complex component 8 (Exoc8) (Rattus norvegicus (Rat)).